Reading from the N-terminus, the 135-residue chain is UPF0329 protein ECU07_1860/ECU10_0040/ECU11_2100 (135 aa).

Belongs to the UPF0329 family.

This Encephalitozoon cuniculi (strain GB-M1) (Microsporidian parasite) protein is UPF0329 protein ECU07_1860/ECU10_0040/ECU11_2100.